Here is a 249-residue protein sequence, read N- to C-terminus: Pyridoxine 5'-phosphate synthase (249 aa).

3-amino-2-oxopropyl phosphate is bound at residue Asn12. 14–15 (DH) lines the 1-deoxy-D-xylulose 5-phosphate pocket. Arg23 is a 3-amino-2-oxopropyl phosphate binding site. The Proton acceptor role is filled by His48. The 1-deoxy-D-xylulose 5-phosphate site is built by Arg50 and His55. Residue Glu75 is the Proton acceptor of the active site. Thr105 is a binding site for 1-deoxy-D-xylulose 5-phosphate. His199 acts as the Proton donor in catalysis. 3-amino-2-oxopropyl phosphate contacts are provided by residues Gly200 and 221-222 (GH).

Belongs to the PNP synthase family. Homooctamer; tetramer of dimers.

It localises to the cytoplasm. The enzyme catalyses 3-amino-2-oxopropyl phosphate + 1-deoxy-D-xylulose 5-phosphate = pyridoxine 5'-phosphate + phosphate + 2 H2O + H(+). It functions in the pathway cofactor biosynthesis; pyridoxine 5'-phosphate biosynthesis; pyridoxine 5'-phosphate from D-erythrose 4-phosphate: step 5/5. Its function is as follows. Catalyzes the complicated ring closure reaction between the two acyclic compounds 1-deoxy-D-xylulose-5-phosphate (DXP) and 3-amino-2-oxopropyl phosphate (1-amino-acetone-3-phosphate or AAP) to form pyridoxine 5'-phosphate (PNP) and inorganic phosphate. This is Pyridoxine 5'-phosphate synthase from Roseobacter denitrificans (strain ATCC 33942 / OCh 114) (Erythrobacter sp. (strain OCh 114)).